A 492-amino-acid chain; its full sequence is RNA-binding protein Nova-2 (492 aa).

The Bipartite nuclear localization signal signature appears at 10–26 (KRPLETPPEVVCTKRSN). In terms of domain architecture, KH 1 spans 32 to 99 (EYFLKVLIPS…EALNAVHSFI (68 aa)). Residue lysine 112 forms a Glycyl lysine isopeptide (Lys-Gly) (interchain with G-Cter in SUMO2) linkage. KH domains lie at 130–196 (AKQA…VSAI) and 406–473 (KELV…QYLI).

Interacts with PTBP2; the interaction is direct. As to expression, brain. Expression restricted to astrocytes.

It localises to the nucleus. Functionally, functions to regulate alternative splicing in neurons by binding pre-mRNA in a sequence-specific manner to activate exon inclusion or exclusion. It binds specifically to the sequences 5'-YCAY-3' and regulates splicing in only a subset of regulated exons. Binding to an exonic 5'-YCAY-3' cluster changes the protein complexes assembled on pre-mRNA, blocking U1 snRNP binding and exon inclusion, whereas binding to an intronic 5'-YCAY-3' cluster enhances spliceosome assembly and exon inclusion. With NOVA1, they perform unique biological functions in different brain areas and cell types. Uniquely regulates alternative splicing events of a series of axon guidance related genes during cortical development, being essential for central nervous system development by regulating neural networks wiring. Regulates differentially alternative splicing on the same transcripts expressed in different neurons. This includes functional differences in transcripts expressed in cortical and cerebellar excitatory versus inhibitory neurons where is required for, respectively, development of laminar structure and motor coordination and synapse formation. Also the regulation the regulation of intron retention can sequester the trans-acting splicing factor PTBP2, acting as a variable cis-acting scaffolding platform for PTBP2 across various natural conditions. This chain is RNA-binding protein Nova-2, found in Homo sapiens (Human).